The sequence spans 119 residues: Small ribosomal subunit protein bS6 (119 aa).

The protein belongs to the bacterial ribosomal protein bS6 family.

Functionally, binds together with bS18 to 16S ribosomal RNA. The polypeptide is Small ribosomal subunit protein bS6 (Buchnera aphidicola subsp. Baizongia pistaciae (strain Bp)).